Consider the following 1427-residue polypeptide: DNA-directed RNA polymerase subunit beta' (1427 aa).

Residues cysteine 66, cysteine 68, cysteine 81, and cysteine 84 each contribute to the Zn(2+) site. Mg(2+)-binding residues include aspartate 472, aspartate 474, and aspartate 476. Zn(2+)-binding residues include cysteine 815, cysteine 889, cysteine 896, and cysteine 899.

The protein belongs to the RNA polymerase beta' chain family. In terms of assembly, the RNAP catalytic core consists of 2 alpha, 1 beta, 1 beta' and 1 omega subunit. When a sigma factor is associated with the core the holoenzyme is formed, which can initiate transcription. It depends on Mg(2+) as a cofactor. Zn(2+) serves as cofactor.

The enzyme catalyses RNA(n) + a ribonucleoside 5'-triphosphate = RNA(n+1) + diphosphate. In terms of biological role, DNA-dependent RNA polymerase catalyzes the transcription of DNA into RNA using the four ribonucleoside triphosphates as substrates. This chain is DNA-directed RNA polymerase subunit beta', found in Bacteroides fragilis (strain YCH46).